Consider the following 178-residue polypeptide: MPRSALLCCLILLAGVAASRDQGTQSENSCAHFPASLPHMLRELRAAFGRVKTFFQMKDQLDNMLLTRSLLEDFKGYLGCQALSEMIQFYLEEVMPQAENHGPDIKEHVNSLGEKLKTLRLRLRRCHRFLPCENKSKAVEQVRGVFSKLQEKGVYKAMSEFDIFINYIEAYMTMKMKN.

Residues 1–18 (MPRSALLCCLILLAGVAA) form the signal peptide. 2 cysteine pairs are disulfide-bonded: C30-C126 and C80-C132. The N-linked (GlcNAc...) asparagine glycan is linked to N134.

It belongs to the IL-10 family. Homodimer. Interacts with IL10RA and IL10RB.

The protein localises to the secreted. In terms of biological role, major immune regulatory cytokine that acts on many cells of the immune system where it has profound anti-inflammatory functions, limiting excessive tissue disruption caused by inflammation. Mechanistically, IL10 binds to its heterotetrameric receptor comprising IL10RA and IL10RB leading to JAK1 and STAT2-mediated phosphorylation of STAT3. In turn, STAT3 translocates to the nucleus where it drives expression of anti-inflammatory mediators. Targets antigen-presenting cells (APCs) such as macrophages and monocytes and inhibits their release of pro-inflammatory cytokines including granulocyte-macrophage colony-stimulating factor /GM-CSF, granulocyte colony-stimulating factor/G-CSF, IL-1 alpha, IL-1 beta, IL-6, IL-8 and TNF-alpha. Also interferes with antigen presentation by reducing the expression of MHC-class II and co-stimulatory molecules, thereby inhibiting their ability to induce T cell activation. In addition, controls the inflammatory response of macrophages by reprogramming essential metabolic pathways including mTOR signaling. This Lama glama (Llama) protein is Interleukin-10 (IL10).